We begin with the raw amino-acid sequence, 295 residues long: Nucleotide-binding protein CMS1991 (295 aa).

19–26 (GMSGAGRS) lines the ATP pocket. 70 to 73 (DVRG) contributes to the GTP binding site.

Belongs to the RapZ-like family.

Functionally, displays ATPase and GTPase activities. The chain is Nucleotide-binding protein CMS1991 from Clavibacter sepedonicus (Clavibacter michiganensis subsp. sepedonicus).